Here is a 305-residue protein sequence, read N- to C-terminus: HPr kinase/phosphorylase (305 aa).

Residues H138 and K159 contribute to the active site. 153-160 (GESGIGKS) contacts ATP. S160 provides a ligand contact to Mg(2+). The active-site Proton acceptor; for phosphorylation activity. Proton donor; for dephosphorylation activity is the D177. The segment at 201–210 (IEIRGIGILD) is important for the catalytic mechanism of both phosphorylation and dephosphorylation. Mg(2+) is bound at residue E202. R243 is an active-site residue. The interval 264-269 (PVRPGR) is important for the catalytic mechanism of dephosphorylation.

This sequence belongs to the HPrK/P family. Homohexamer. Mg(2+) is required as a cofactor.

It catalyses the reaction [HPr protein]-L-serine + ATP = [HPr protein]-O-phospho-L-serine + ADP + H(+). It carries out the reaction [HPr protein]-O-phospho-L-serine + phosphate + H(+) = [HPr protein]-L-serine + diphosphate. In terms of biological role, catalyzes the ATP- as well as the pyrophosphate-dependent phosphorylation of a specific serine residue in HPr, a phosphocarrier protein of the phosphoenolpyruvate-dependent sugar phosphotransferase system (PTS). HprK/P also catalyzes the pyrophosphate-producing, inorganic phosphate-dependent dephosphorylation (phosphorolysis) of seryl-phosphorylated HPr (P-Ser-HPr). The two antagonistic activities of HprK/P are regulated by several intracellular metabolites, which change their concentration in response to the absence or presence of rapidly metabolisable carbon sources (glucose, fructose, etc.) in the growth medium. Therefore, by controlling the phosphorylation state of HPr, HPrK/P is a sensor enzyme that plays a major role in the regulation of carbon metabolism and sugar transport: it mediates carbon catabolite repression (CCR), and regulates PTS-catalyzed carbohydrate uptake and inducer exclusion. The polypeptide is HPr kinase/phosphorylase (Caldanaerobacter subterraneus subsp. tengcongensis (strain DSM 15242 / JCM 11007 / NBRC 100824 / MB4) (Thermoanaerobacter tengcongensis)).